The chain runs to 276 residues: Ribosomal RNA small subunit methyltransferase A (276 aa).

Positions 27, 29, 54, 75, 101, and 122 each coordinate S-adenosyl-L-methionine.

The protein belongs to the class I-like SAM-binding methyltransferase superfamily. rRNA adenine N(6)-methyltransferase family. RsmA subfamily.

The protein resides in the cytoplasm. It catalyses the reaction adenosine(1518)/adenosine(1519) in 16S rRNA + 4 S-adenosyl-L-methionine = N(6)-dimethyladenosine(1518)/N(6)-dimethyladenosine(1519) in 16S rRNA + 4 S-adenosyl-L-homocysteine + 4 H(+). Its function is as follows. Specifically dimethylates two adjacent adenosines (A1518 and A1519) in the loop of a conserved hairpin near the 3'-end of 16S rRNA in the 30S particle. May play a critical role in biogenesis of 30S subunits. This is Ribosomal RNA small subunit methyltransferase A from Brucella abortus (strain S19).